The primary structure comprises 103 residues: Protein S100-A16 (103 aa).

The 36-residue stretch at 12-47 folds into the EF-hand 1; degenerate domain; the sequence is VVVLVENFYKYVSKHSLVKNKISKSSFRKMLQKELN. An EF-hand 2 domain is found at 54 to 89; it reads GNRKAADKLIQNLDANHDGRISFDEYWTLIGGITSP. Residues D67, N69, D71, R73, and E78 each coordinate Ca(2+).

The protein belongs to the S-100 family. Homodimer. Interacts with TP53.

The protein localises to the nucleus. The protein resides in the nucleolus. It localises to the cytoplasm. In terms of biological role, calcium-binding protein. Binds one calcium ion per monomer. Can promote differentiation of adipocytes (in vitro). Overexpression in preadipocytes increases their proliferation, enhances adipogenesis and reduces insulin-stimulated glucose uptake. This is Protein S100-A16 (S100A16) from Bos taurus (Bovine).